Reading from the N-terminus, the 200-residue chain is Putative hydrolase MhqD (200 aa).

Catalysis depends on charge relay system residues serine 100, aspartate 150, and histidine 181.

The protein belongs to the AB hydrolase superfamily. AB hydrolase 2 family.

Its subcellular location is the cytoplasm. Putative hydrolase that may contribute to the degradation of aromatic compounds. This is Putative hydrolase MhqD (mhqD) from Bacillus subtilis (strain 168).